Here is a 512-residue protein sequence, read N- to C-terminus: Monocarboxylate transporter 10 (512 aa).

Residues 1 to 44 (MVPSQEEPAAERETNEAQPPGPAPSDDAPLPGPGPSDVSDVAAE) form a disordered region. Residues 1–63 (MVPSQEEPAA…AGSEPPVPPE (63 aa)) lie on the Cytoplasmic side of the membrane. Residues 64-84 (GGWGWLVMLAAMWCNGSVFGI) form a helical membrane-spanning segment. Residues 85-111 (QNAYGVLFVSMLDTFKAKDDDNMAFKT) lie on the Extracellular side of the membrane. The helical transmembrane segment at 112-132 (AWVGSLSMGMIFFCCPIVSVF) threads the bilayer. Over 133 to 141 (TDMFGCRRT) the chain is Cytoplasmic. The chain crosses the membrane as a helical span at residues 142-162 (AVVGAAVGFIGLMSSSFVSSI). Over 163–168 (EPLYLT) the chain is Extracellular. A helical membrane pass occupies residues 169-189 (YGIIFACGCSFAYQPSLVILG). The Cytoplasmic segment spans residues 190–201 (HYFKKRLGLVNG). The chain crosses the membrane as a helical span at residues 202–222 (IVTAGSSVFTILLPLLLGNLI). The Extracellular portion of the chain corresponds to 223–232 (SSVKLFNTLR). The chain crosses the membrane as a helical span at residues 233–253 (ILCIFMFVLFLAGFTYRPLVP). The Cytoplasmic segment spans residues 254–291 (STKEKESGGSRSSFFSRRKLSPPKKVFNFALFKETTYA). At S260 the chain carries Phosphoserine. Residues 292 to 312 (VWAAGIPLALFGYFVPYVHLM) form a helical membrane-spanning segment. At 313-326 (NHVKERFQDVNNKE) the chain is on the extracellular side. The helical transmembrane segment at 327 to 347 (VLFMCIGITSGVGRLLFGRIA) threads the bilayer. Over 348-362 (DYLPGVKKVYLQVLS) the chain is Cytoplasmic. A helical membrane pass occupies residues 363–383 (FFFIGLMSMMIPLCSAFGALI). A384 is a topological domain (extracellular). The chain crosses the membrane as a helical span at residues 385-405 (VCLAMGLFDGCFISIMAPIAF). Residues 406–416 (ELVGPQDASQA) lie on the Cytoplasmic side of the membrane. The chain crosses the membrane as a helical span at residues 417–437 (IGFLLGFMSIPMTVGPPIAGL). The Extracellular portion of the chain corresponds to 438–448 (LHDKLGTYDVA). A helical transmembrane segment spans residues 449–469 (FYLAGIPPFVGGVVLCLIPWI). Residues 470–512 (HSKKQRKISKNAGGEKMEKMLENQSSLLSGSSGIFKKDSASII) lie on the Cytoplasmic side of the membrane. S495, S498, S500, and S501 each carry phosphoserine.

The protein belongs to the major facilitator superfamily. Monocarboxylate porter (TC 2.A.1.13) family. Not N-glycosylated. As to expression, highly expressed in small intestine, particularly in jejunum and ileum, scarcely in colon and substantially in kidney, liver and skeletal muscle. In the brain expression is low and appears to be restricted to a subset of neurons, microglia cells, and oligodendrocytes.

The protein localises to the cell membrane. It is found in the basolateral cell membrane. The catalysed reaction is L-tryptophan(in) = L-tryptophan(out). The enzyme catalyses L-tyrosine(in) = L-tyrosine(out). It catalyses the reaction L-phenylalanine(in) = L-phenylalanine(out). It carries out the reaction 3,3',5-triiodo-L-thyronine(out) = 3,3',5-triiodo-L-thyronine(in). The catalysed reaction is L-thyroxine(out) = L-thyroxine(in). Functionally, sodium- and proton-independent thyroid hormones and aromatic acids transporter. Mediates both uptake and efflux of 3,5,3'-triiodothyronine (T3) and 3,5,3',5'-tetraiodothyronine (T4) with high affinity, suggesting a role in the homeostasis of thyroid hormone levels. Responsible for low affinity bidirectional transport of the aromatic amino acids, such as phenylalanine, tyrosine, tryptophan and L-3,4-dihydroxyphenylalanine (L-dopa). Plays an important role in homeostasis of aromatic amino acids. The polypeptide is Monocarboxylate transporter 10 (Slc16a10) (Mus musculus (Mouse)).